The primary structure comprises 172 residues: Adenine phosphoribosyltransferase (172 aa).

Belongs to the purine/pyrimidine phosphoribosyltransferase family. As to quaternary structure, homodimer.

It is found in the cytoplasm. The enzyme catalyses AMP + diphosphate = 5-phospho-alpha-D-ribose 1-diphosphate + adenine. It participates in purine metabolism; AMP biosynthesis via salvage pathway; AMP from adenine: step 1/1. Functionally, catalyzes a salvage reaction resulting in the formation of AMP, that is energically less costly than de novo synthesis. The chain is Adenine phosphoribosyltransferase from Prochlorococcus marinus (strain MIT 9211).